The primary structure comprises 262 residues: Small ribosomal subunit protein eS4A (262 aa).

In terms of domain architecture, S4 RNA-binding spans 42-105; sequence LPLIVFLRNR…GEHFRLVYDI (64 aa).

It belongs to the eukaryotic ribosomal protein eS4 family. As to quaternary structure, component of the small ribosomal subunit (SSU). Mature yeast ribosomes consist of a small (40S) and a large (60S) subunit. The 40S small subunit contains 1 molecule of ribosomal RNA (18S rRNA) and at least 33 different proteins. The large 60S subunit contains 3 rRNA molecules (25S, 5.8S and 5S rRNA) and at least 46 different proteins.

The protein resides in the cytoplasm. Its function is as follows. Component of the ribosome, a large ribonucleoprotein complex responsible for the synthesis of proteins in the cell. The small ribosomal subunit (SSU) binds messenger RNAs (mRNAs) and translates the encoded message by selecting cognate aminoacyl-transfer RNA (tRNA) molecules. The large subunit (LSU) contains the ribosomal catalytic site termed the peptidyl transferase center (PTC), which catalyzes the formation of peptide bonds, thereby polymerizing the amino acids delivered by tRNAs into a polypeptide chain. The nascent polypeptides leave the ribosome through a tunnel in the LSU and interact with protein factors that function in enzymatic processing, targeting, and the membrane insertion of nascent chains at the exit of the ribosomal tunnel. The chain is Small ribosomal subunit protein eS4A (rps401) from Schizosaccharomyces pombe (strain 972 / ATCC 24843) (Fission yeast).